Here is a 160-residue protein sequence, read N- to C-terminus: MKSLQKGFTLIELMIVVAIIGILAAFAIPAYNDYIARSQAAEGVSLADGLKVRIAENLQDGECKGPDADPASGVVGNKDTGKYALAEIDGTYDASKTAAGDPNGCKVNITYGQGTAADKISKLITGKKLVLDQLVNGSFIQGDGTDLADKFIPNAVKAKK.

The propeptide at 1–7 (MKSLQKG) is leader sequence. F8 is modified (N-methylphenylalanine). The chain crosses the membrane as a helical span at residues 8 to 28 (FTLIELMIVVAIIGILAAFAI).

Belongs to the N-Me-Phe pilin family. As to quaternary structure, the pili are polar flexible filaments of about 5.4 nanometers diameter and 2.5 micrometers average length; they consist of only a single polypeptide chain arranged in a helical configuration of five subunits per turn in the assembled pilus.

The protein resides in the fimbrium. The protein localises to the membrane. The sequence is that of Fimbrial protein (fimA) from Dichelobacter nodosus (Bacteroides nodosus).